Consider the following 451-residue polypeptide: Proline--tRNA ligase (451 aa).

It belongs to the class-II aminoacyl-tRNA synthetase family. ProS type 2 subfamily. Homodimer.

It localises to the cytoplasm. It catalyses the reaction tRNA(Pro) + L-proline + ATP = L-prolyl-tRNA(Pro) + AMP + diphosphate. In terms of biological role, catalyzes the attachment of proline to tRNA(Pro) in a two-step reaction: proline is first activated by ATP to form Pro-AMP and then transferred to the acceptor end of tRNA(Pro). The polypeptide is Proline--tRNA ligase (Ruegeria sp. (strain TM1040) (Silicibacter sp.)).